A 575-amino-acid chain; its full sequence is Membrane protein insertase YidC (575 aa).

Transmembrane regions (helical) follow at residues 6–26 (VFLI…WGKD), 357–377 (FSIM…LHSF), 381–401 (WGWA…PLSA), 448–468 (GGCL…WVLV), 490–510 (PYFI…KLTP), and 526–546 (PLVF…YWVV).

The protein belongs to the OXA1/ALB3/YidC family. Type 1 subfamily. In terms of assembly, interacts with the Sec translocase complex via SecD. Specifically interacts with transmembrane segments of nascent integral membrane proteins during membrane integration.

It localises to the cell inner membrane. Functionally, required for the insertion and/or proper folding and/or complex formation of integral membrane proteins into the membrane. Involved in integration of membrane proteins that insert both dependently and independently of the Sec translocase complex, as well as at least some lipoproteins. Aids folding of multispanning membrane proteins. The sequence is that of Membrane protein insertase YidC from Xanthomonas campestris pv. campestris (strain B100).